Reading from the N-terminus, the 1007-residue chain is Probable beta-galactosidase A (1007 aa).

A signal peptide spans 1-18 (MKLSSACAIALLAAQAAG). Residues tyrosine 96, asparagine 140, alanine 141, and glutamate 142 each contribute to the substrate site. N-linked (GlcNAc...) asparagine glycosylation is present at asparagine 156. Asparagine 199 provides a ligand contact to substrate. The active-site Proton donor is glutamate 200. A disulfide bridge links cysteine 205 with cysteine 206. Tyrosine 260 contributes to the substrate binding site. Cysteine 266 and cysteine 315 form a disulfide bridge. The active-site Nucleophile is the glutamate 298. Tyrosine 364 is a substrate binding site. Asparagine 373, asparagine 402, asparagine 422, asparagine 478, asparagine 522, asparagine 622, asparagine 739, asparagine 760, asparagine 777, and asparagine 805 each carry an N-linked (GlcNAc...) asparagine glycan. A disordered region spans residues 862-881 (RQGFHQPEPPSQDWKSSSPL). N-linked (GlcNAc...) asparagine glycosylation is present at asparagine 914.

This sequence belongs to the glycosyl hydrolase 35 family.

It is found in the secreted. The catalysed reaction is Hydrolysis of terminal non-reducing beta-D-galactose residues in beta-D-galactosides.. Its function is as follows. Cleaves beta-linked terminal galactosyl residues from gangliosides, glycoproteins, and glycosaminoglycans. In Aspergillus phoenicis (Aspergillus saitoi), this protein is Probable beta-galactosidase A (lacA).